Consider the following 654-residue polypeptide: tRNA uridine 5-carboxymethylaminomethyl modification enzyme MnmG (654 aa).

Residue 17–22 (GGGHAG) coordinates FAD. Position 289-303 (289-303 (GPRYCPSIEDKIVKF)) interacts with NAD(+).

It belongs to the MnmG family. Homodimer. Heterotetramer of two MnmE and two MnmG subunits. FAD serves as cofactor.

The protein localises to the cytoplasm. NAD-binding protein involved in the addition of a carboxymethylaminomethyl (cmnm) group at the wobble position (U34) of certain tRNAs, forming tRNA-cmnm(5)s(2)U34. The chain is tRNA uridine 5-carboxymethylaminomethyl modification enzyme MnmG from Prochlorococcus marinus subsp. pastoris (strain CCMP1986 / NIES-2087 / MED4).